The chain runs to 857 residues: MVNFTVDQIRAIMDKKANIRNMSVIAHVDHGKSTLTDSLVCKAGIIASARAGETRFTDTRKDEQERCITIKSTAISLFYELSENDLNFIKQSKDGAGFLINLIDSPGHVDFSSEVTAALRVTDGALVVVDCVSGVCVQTETVLRQAIAERIKPVLMMNKMDRALLELQLEPEELYQTFQRIVENVNVIISTYGEGESGPMGNIMIDPVLGTVGFGSGLHGWAFTLKQFAEMYVAKFAAKGEGQLGPAERAKKVEDMMKKLWGDRYFDPANGKFSKSATSPEGKKLPRTFCQLILDPIFKVFDAIMNFKKEETAKLIEKLDIKLDSEDKDKEGKPLLKAVMRRWLPAGDALLQMITIHLPSPVTAQKYRCELLYEGPPDDEAAMGIKSCDPKGPLMMYISKMVPTSDKGRFYAFGRVFSGLVSTGLKVRIMGPNYTPGKKEDLYLKPIQRTILMMGRYVEPIEDVPCGNIVGLVGVDQFLVKTGTITTFEHAHNMRVMKFSVSPVVRVAVEAKNPADLPKLVEGLKRLAKSDPMVQCIIEESGEHIIAGAGELHLEICLKDLEEDHACIPIKKSDPVVSYRETVSEESNVLCLSKSPNKHNRLYMKARPFPDGLAEDIDKGEVSARQELKQRARYLAEKYEWDVAEARKIWCFGPDGTGPNILTDITKGVQYLNEIKDSVVAGFQWATKEGALCEENMRGVRFDVHDVTLHADAIHRGGGQIIPTARRCLYASVLTAQPRLMEPIYLVEIQCPEQVVGGIYGVLNRKRGHVFEESQVAGTPMFVVKAYLPVNESFGFTADLRSNTGGQAFPQCVFDHWQILPGDPFDNSSRPSQVVAETRKRKGLKEIPALDNFLDKL.

Positions 17–362 constitute a tr-type G domain; the sequence is ANIRNMSVIA…MITIHLPSPV (346 aa). 26-33 contacts GTP; the sequence is AHVDHGKS. Phosphothreonine is present on residues Thr54, Thr57, and Thr59. At Lys152 the chain carries N6-succinyllysine. GTP contacts are provided by residues 158–161 and 216–218; these read NKMD and SGL. Position 235 is an N6-acetyllysine (Lys235). Position 239 is an N6-acetyllysine; alternate (Lys239). Lys239 participates in a covalent cross-link: Glycyl lysine isopeptide (Lys-Gly) (interchain with G-Cter in SUMO1); alternate. Tyr265 bears the Phosphotyrosine mark. Lys272 carries the N6-acetyllysine; alternate modification. N6-succinyllysine; alternate is present on Lys272. Lys275 is modified (N6-acetyllysine). Residue Lys322 forms a Glycyl lysine isopeptide (Lys-Gly) (interchain with G-Cter in SUMO) linkage. Position 325 is a phosphoserine (Ser325). At Tyr373 the chain carries Phosphotyrosine. Thr435 is subject to Phosphothreonine. An N6-acetyllysine mark is found at Lys439 and Lys445. Ser502 bears the Phosphoserine mark. An N6,N6,N6-trimethyllysine modification is found at Lys525. A Glycyl lysine isopeptide (Lys-Gly) (interchain with G-Cter in SUMO) cross-link involves residue Lys529. Lys572 is modified (N6-succinyllysine). Phosphoserine is present on Ser595. Lys619 carries the N6-acetyllysine modification. Residue His715 is modified to Diphthamide.

The protein belongs to the GTP-binding elongation factor family. EF-G/EF-2 subfamily. Binds to 80S ribosomes. Actively translating ribosomes show mutually exclusive binding of eIF5a (EIF5A or EIF5A2) and EEF2/eEF2. Interacts with SERBP1; interaction sequesters EEF2/eEF2 at the A-site of the ribosome, thereby blocking the interaction sites of the mRNA-tRNA complex, promoting ribosome stabilization and hibernation. Interacts with HABP4; interaction takes place at the A-site of hibernating ribosomes and promotes ribosome stabilization. Component of the mRNA surveillance SURF complex, at least composed of ERF1, ERF3 (ERF3A or ERF3B), EEF2, UPF1/RENT1, SMG1, SMG8 and SMG9. Interacts with RBPMS2. In terms of processing, phosphorylation by EF-2 kinase completely inactivates EF-2; it requires prior phosphorylation by CDK2 at Ser-595 during mitotic prometaphase. Phosphorylation by CSK promotes SUMOylation, proteolytic cleavage, and nuclear translocation if the C-terminal fragment. Post-translationally, diphthamide is 2-[3-carboxyamido-3-(trimethyl-ammonio)propyl]histidine. ISGylated. In terms of processing, proteolytically processed at two sites following phosphorylation by CSK. Post-translationally, SUMOylated following phosphorylation by CSK, promotes proteolytic cleavage.

The protein localises to the cytoplasm. It localises to the nucleus. It carries out the reaction GTP + H2O = GDP + phosphate + H(+). In terms of biological role, catalyzes the GTP-dependent ribosomal translocation step during translation elongation. During this step, the ribosome changes from the pre-translocational (PRE) to the post-translocational (POST) state as the newly formed A-site-bound peptidyl-tRNA and P-site-bound deacylated tRNA move to the P and E sites, respectively. Catalyzes the coordinated movement of the two tRNA molecules, the mRNA and conformational changes in the ribosome. This is Elongation factor 2 (EEF2) from Oryctolagus cuniculus (Rabbit).